The chain runs to 500 residues: Cytochrome P450 2D16 (500 aa).

A Phosphoserine modification is found at Ser249. Cys446 is a binding site for heme.

The protein belongs to the cytochrome P450 family. Requires heme as cofactor. As to expression, expressed at high levels in the inner zone of the adrenal cortex.

The protein resides in the endoplasmic reticulum membrane. It is found in the microsome membrane. It catalyses the reaction an organic molecule + reduced [NADPH--hemoprotein reductase] + O2 = an alcohol + oxidized [NADPH--hemoprotein reductase] + H2O + H(+). Cytochromes P450 are a group of heme-thiolate monooxygenases. In liver microsomes, this enzyme is involved in an NADPH-dependent electron transport pathway. It oxidizes a variety of structurally unrelated compounds, including steroids, fatty acids, and xenobiotics. This is Cytochrome P450 2D16 (CYP2D16) from Cavia porcellus (Guinea pig).